The sequence spans 126 residues: UPF0325 protein VFMJ11_2099 (126 aa).

Belongs to the UPF0325 family.

The chain is UPF0325 protein VFMJ11_2099 from Aliivibrio fischeri (strain MJ11) (Vibrio fischeri).